The following is a 142-amino-acid chain: Transcription antitermination protein NusB (142 aa).

Belongs to the NusB family.

In terms of biological role, involved in transcription antitermination. Required for transcription of ribosomal RNA (rRNA) genes. Binds specifically to the boxA antiterminator sequence of the ribosomal RNA (rrn) operons. The protein is Transcription antitermination protein NusB of Thermotoga petrophila (strain ATCC BAA-488 / DSM 13995 / JCM 10881 / RKU-1).